Reading from the N-terminus, the 355-residue chain is UDP-N-acetylglucosamine--N-acetylmuramyl-(pentapeptide) pyrophosphoryl-undecaprenol N-acetylglucosamine transferase (355 aa).

UDP-N-acetyl-alpha-D-glucosamine is bound by residues 15–17 (TGG), N127, R163, S191, I244, 263–268 (ALTVSE), and Q288.

Belongs to the glycosyltransferase 28 family. MurG subfamily.

Its subcellular location is the cell inner membrane. It catalyses the reaction di-trans,octa-cis-undecaprenyl diphospho-N-acetyl-alpha-D-muramoyl-L-alanyl-D-glutamyl-meso-2,6-diaminopimeloyl-D-alanyl-D-alanine + UDP-N-acetyl-alpha-D-glucosamine = di-trans,octa-cis-undecaprenyl diphospho-[N-acetyl-alpha-D-glucosaminyl-(1-&gt;4)]-N-acetyl-alpha-D-muramoyl-L-alanyl-D-glutamyl-meso-2,6-diaminopimeloyl-D-alanyl-D-alanine + UDP + H(+). It functions in the pathway cell wall biogenesis; peptidoglycan biosynthesis. In terms of biological role, cell wall formation. Catalyzes the transfer of a GlcNAc subunit on undecaprenyl-pyrophosphoryl-MurNAc-pentapeptide (lipid intermediate I) to form undecaprenyl-pyrophosphoryl-MurNAc-(pentapeptide)GlcNAc (lipid intermediate II). This chain is UDP-N-acetylglucosamine--N-acetylmuramyl-(pentapeptide) pyrophosphoryl-undecaprenol N-acetylglucosamine transferase, found in Cronobacter sakazakii (strain ATCC BAA-894) (Enterobacter sakazakii).